The following is a 163-amino-acid chain: MTFEEKLSKIYNEIANEISSMIPVEWEKVYTMAYIDDGGGEVFFNYTKPGSDDLNYYTNIPKEYNISVQVFDDLWMDLYDLFEELRDLFKEEDLEPWTSCEFDFTREGELKVSFDYIDWINSEFGQIGRQNYYKYRKFGILPETEYEINKVKEIEQYIKELEE.

Interacts with EssD (via C-terminus). Interacts with EssE.

The protein resides in the cytoplasm. Functionally, component of the type VII secretion system (Ess). Also acts as part of toxin-antitoxin system. Counteracts the toxic effect of EssD via direct interaction. This is Type VII secretion system protein EsaG from Staphylococcus aureus (strain NCTC 8325 / PS 47).